A 2314-amino-acid polypeptide reads, in one-letter code: A-kinase anchor protein 6 (2314 aa).

The span at 1–12 shows a compositional bias: polar residues; sequence MLTMSVTLSPLR. 4 disordered regions span residues 1–25, 285–432, 505–613, and 736–755; these read MLTM…DASP, PSSC…DPPD, SLCR…PCHA, and TDEK…HSAT. The segment covering 301–311 has biased composition (basic and acidic residues); it reads SDDHKGEHGED. The segment covering 319–330 has biased composition (polar residues); that stretch reads QLDSTVGMSSLD. Basic and acidic residues predominate over residues 398–420; it reads ETQKNERKGSDRKGQVVDLKPEL. Residues 569 to 592 are compositionally biased toward low complexity; sequence SKASSSPPCSHSSESSLGSDSIKS. A compositionally biased stretch (basic and acidic residues) spans 736–753; sequence TDEKSERPSSSEKNESHS. 2 Spectrin repeats span residues 768 to 847 and 1033 to 1148; these read QHQE…QLLE and ILEK…LLDD. Phosphoserine is present on serine 1072. Positions 1349–1401 are disordered; the sequence is CHSGDLSQNSGSESGIVSEGDNEMPTNSDMSLFSMVDGSPSNPETEHPDPQMG. Residues 1353 to 1363 show a composition bias toward polar residues; the sequence is DLSQNSGSESG. A phosphoserine mark is found at serine 1568 and serine 1593. Basic and acidic residues-rich tracts occupy residues 1816-1831 and 1874-1891; these read RSGV…DGGG and GENK…HVAD. 3 disordered regions span residues 1816–1838, 1854–1926, and 1940–2012; these read RSGV…ANPS, LSEN…KTIS, and SEDS…SGAR. Polar residues predominate over residues 1917 to 1926; sequence NLASNVKTIS. The segment covering 1944–1958 has biased composition (basic and acidic residues); it reads SVARKEFCPPNDRHP. Residues 2062–2075 are PKA-RII subunit binding domain; sequence IIDMASTALKSKSQ. The interval 2166-2286 is disordered; sequence EEAGLPGALP…NAKQPKGKVA (121 aa). A compositionally biased stretch (basic and acidic residues) spans 2215 to 2226; sequence GADDAKEGDDVS. The segment covering 2227 to 2243 has biased composition (polar residues); it reads HTSQGCAESTEPTTPSG.

As to quaternary structure, interacts with RII subunit of PKA, phosphatase 2B (calcineurin) and AKAP79. Interacts with SYNPO2.

Its subcellular location is the sarcoplasmic reticulum. It localises to the nucleus membrane. Functionally, binds to type II regulatory subunits of protein kinase A and anchors/targets them to the nuclear membrane or sarcoplasmic reticulum. May act as an adapter for assembling multiprotein complexes. In Rattus norvegicus (Rat), this protein is A-kinase anchor protein 6 (Akap6).